The sequence spans 210 residues: N-(5'-phosphoribosyl)anthranilate isomerase (210 aa).

This sequence belongs to the TrpF family.

The enzyme catalyses N-(5-phospho-beta-D-ribosyl)anthranilate = 1-(2-carboxyphenylamino)-1-deoxy-D-ribulose 5-phosphate. The protein operates within amino-acid biosynthesis; L-tryptophan biosynthesis; L-tryptophan from chorismate: step 3/5. In Pseudomonas fluorescens (strain ATCC BAA-477 / NRRL B-23932 / Pf-5), this protein is N-(5'-phosphoribosyl)anthranilate isomerase.